The sequence spans 248 residues: Triosephosphate isomerase (248 aa).

The substrate site is built by asparagine 10 and lysine 12. Histidine 95 serves as the catalytic Electrophile. The Proton acceptor role is filled by glutamate 165.

It belongs to the triosephosphate isomerase family. As to quaternary structure, homodimer.

The protein resides in the cytoplasm. The enzyme catalyses D-glyceraldehyde 3-phosphate = dihydroxyacetone phosphate. Its pathway is carbohydrate biosynthesis; gluconeogenesis. It participates in carbohydrate degradation; glycolysis; D-glyceraldehyde 3-phosphate from glycerone phosphate: step 1/1. The chain is Triosephosphate isomerase (TPI1) from Candida albicans (strain SC5314 / ATCC MYA-2876) (Yeast).